The following is a 328-amino-acid chain: Lactamase-like protein nscB (328 aa).

Residues H97, H99, D101, and H102 each contribute to the Zn(2+) site. The Proton donor/acceptor role is filled by D101.

Belongs to the metallo-beta-lactamase superfamily. Requires Zn(2+) as cofactor.

It participates in secondary metabolite biosynthesis. Lactamase-like protein; part of the gene cluster that mediates the biosynthesis of neosartoricin, a prenylated anthracenone that exhibits T-cell antiproliferative activity, suggestive of a physiological role as an immunosuppressive agent. The non-reducing polyketide synthase nscA probably synthesizes and cyclizes the decaketide backbone. The hydrolase nscB then mediates the product release through hydrolysis followed by spontaneous decarboxylation. The prenyltransferase nscD catalyzes the addition of the dimethylallyl group to the aromatic C5. The FAD-dependent monooxygenase nscC is then responsible for the stereospecific hydroxylation at C2. There is no gene encoding O-acetyltransferase in the nsc gene cluster; thus, the last step of 2-O-acetylation leading to neosartoricin may be catalyzed by an unidentified O-acetyltransferase. The chain is Lactamase-like protein nscB from Neosartorya fischeri (strain ATCC 1020 / DSM 3700 / CBS 544.65 / FGSC A1164 / JCM 1740 / NRRL 181 / WB 181) (Aspergillus fischerianus).